A 302-amino-acid chain; its full sequence is MSWIERILNKSTTTPSRKASIPEGVWTKCDSCGQVLYRAELERNLEVCPKCDHHMRMHGRARLHSVLDEGSLIELGSELEPKDVLKFRDSKKYKDRLSAAQKDTSETDALIVMKGTLHGMPVVAAAFEFSFMGGSMGSVVGARFVRAVEQALADNCPMMCFSASGGARMQEALMSLMQMAKTSAALAKMQERGLPYISVLTDPTMGGVSASFAMLGDLNIAEPKALIGFAGPRVIEQTVREKLPPGFQRSEFLIEKGAIDMIVRRPVMRFKLASVLAKMMNLPAPQEDIVTEAAVEPQNPEA.

One can recognise a CoA carboxyltransferase N-terminal domain in the interval 25–294 (VWTKCDSCGQ…PQEDIVTEAA (270 aa)). The Zn(2+) site is built by C29, C32, C48, and C51. The segment at 29-51 (CDSCGQVLYRAELERNLEVCPKC) adopts a C4-type zinc-finger fold.

This sequence belongs to the AccD/PCCB family. Acetyl-CoA carboxylase is a heterohexamer composed of biotin carboxyl carrier protein (AccB), biotin carboxylase (AccC) and two subunits each of ACCase subunit alpha (AccA) and ACCase subunit beta (AccD). Requires Zn(2+) as cofactor.

Its subcellular location is the cytoplasm. The enzyme catalyses N(6)-carboxybiotinyl-L-lysyl-[protein] + acetyl-CoA = N(6)-biotinyl-L-lysyl-[protein] + malonyl-CoA. The protein operates within lipid metabolism; malonyl-CoA biosynthesis; malonyl-CoA from acetyl-CoA: step 1/1. Its function is as follows. Component of the acetyl coenzyme A carboxylase (ACC) complex. Biotin carboxylase (BC) catalyzes the carboxylation of biotin on its carrier protein (BCCP) and then the CO(2) group is transferred by the transcarboxylase to acetyl-CoA to form malonyl-CoA. The sequence is that of Acetyl-coenzyme A carboxylase carboxyl transferase subunit beta from Erwinia tasmaniensis (strain DSM 17950 / CFBP 7177 / CIP 109463 / NCPPB 4357 / Et1/99).